A 501-amino-acid polypeptide reads, in one-letter code: MLPPKIFFEKFKEIIWPIERKELKLFIPMALMMLCILFNFGALRSIKDSLVVPSMGAEIISFLKLWLVLPSCVIFTVLYVKLSNKLNFEYIFYSIVGTFLLFFLLFAYIIYPNQDIYHPNDAMINNLIASYPNLKWFIKIGSKWSYALMYIFSELWSAVVINLMFWQFANHIFDTAKAKRFYPVLGMIGNIGLIIAGSVLVFFSSGQYIIDSELLTDSFNSSSCNSIILQPIISIIVTAGIIAMFLFRIINRFILTNAINVLDVKKAAARTKTKLALIESIKLIIHSKYIGRIALLIICYGLLINIVEGPWKAKIKELHPNTIDYVNFMGMFNIWMGISCVTFMIIGSNILRRLGWLISALLTPIMLSITGFIFFIFIIFIEEIGTCFGDFNLLYVAIIVGAIQNILSKSSKYSLFDSTKEMAYIPLSLELRTKGKAAVEVIGTKFGKSLGAFIQSLIFIIIPTATFDSIIIYLLVIFIVMMNLWIWNIIKLNKEYIKLCK.

12 helical membrane-spanning segments follow: residues 23-43 (LKLFIPMALMMLCILFNFGAL), 59-79 (IISFLKLWLVLPSCVIFTVLY), 90-110 (YIFYSIVGTFLLFFLLFAYII), 146-166 (YALMYIFSELWSAVVINLMFW), 183-203 (PVLGMIGNIGLIIAGSVLVFF), 227-247 (IILQPIISIIVTAGIIAMFLF), 293-313 (IALLIICYGLLINIVEGPWKA), 326-346 (VNFMGMFNIWMGISCVTFMII), 361-381 (LLTPIMLSITGFIFFIFIIFI), 383-403 (EIGTCFGDFNLLYVAIIVGAI), 446-466 (FGKSLGAFIQSLIFIIIPTAT), and 470-490 (IIIYLLVIFIVMMNLWIWNII).

It belongs to the ADP/ATP translocase tlc family.

It localises to the cell membrane. Provides the rickettsial cell with host ATP in exchange for rickettsial ADP. This is an obligate exchange system. This energy acquiring activity is an important component of rickettsial parasitism. The polypeptide is ADP,ATP carrier protein 3 (tlcC) (Rickettsia typhi (strain ATCC VR-144 / Wilmington)).